We begin with the raw amino-acid sequence, 247 residues long: MSSRYDRAVTIFSPDGRLLQVEYAQEAVRKGSTAVGVRGGNCVVLGVEKKSVAKLQEDRTVRKICVLDHVVMAFAGLTDARILINRAQVECQSHRLNVEDPVTLEYITRYIAQLKQKYTQSNGRRPFGISCLIGGFDADGSPYLFQTEPSGIFYEYKANATGCSAKTVREFFEKQYREEEVSTERGAVKLAIRALLEVAQSGQHNLEVAIMENGKPLKMLDRKVILEYLDIIEKEKEEELEKKKQKK.

Belongs to the peptidase T1A family. In terms of assembly, the 26S proteasome consists of a 20S proteasome core and two 19S regulatory subunits. The 20S proteasome core is composed of 28 subunits that are arranged in four stacked rings, resulting in a barrel-shaped structure. The two end rings are each formed by seven alpha subunits, and the two central rings are each formed by seven beta subunits. The catalytic chamber with the active sites is on the inside of the barrel.

It localises to the cytoplasm. It is found in the nucleus. Its function is as follows. The proteasome is a multicatalytic proteinase complex which is characterized by its ability to cleave peptides with Arg, Phe, Tyr, Leu, and Glu adjacent to the leaving group at neutral or slightly basic pH. The proteasome has an ATP-dependent proteolytic activity. This is Proteasome subunit alpha type-7-1 (Pros28.1) from Drosophila virilis (Fruit fly).